Consider the following 392-residue polypeptide: MTSASASLERFAANKLAGLDRRNLRRRTRETRPLGGALVERDGRQLVNACSNDYLGLSQHPAVIEAAAAAARQFGAGSGASRLVTGGHPLLFELEARLAAFKGTEDCLVFGSGYLANLAITPALVGSGDIIFVDTLAHACLHAGARLSGARVEVFPHNDMAALEAMLKTLRPVHRHAMILTDGVFSMDGDLAPLPDMMALAQTHDAWTLIDDAHGIGVIGGGHGSTHAFQPSVVPPLQMGTLSKALGSYGGYVCASRDVCDLLRTRARPLVFTTALPPASIGAALAALDLIEQDSALRERPMDLARRFCRTLGLAEPNSPIVPIIIGDESAALSASAELEDAGFLVTAIRPPTVPRRTARLRITFNAAHSEADIDRLATTLKSILQTAEAAE.

Position 26 (arginine 26) interacts with substrate. Residue 113-114 (GY) coordinates pyridoxal 5'-phosphate. Histidine 138 contacts substrate. Positions 186, 214, and 241 each coordinate pyridoxal 5'-phosphate. An N6-(pyridoxal phosphate)lysine modification is found at lysine 244. Residue threonine 353 coordinates substrate.

This sequence belongs to the class-II pyridoxal-phosphate-dependent aminotransferase family. BioF subfamily. As to quaternary structure, homodimer. Pyridoxal 5'-phosphate serves as cofactor.

It carries out the reaction 6-carboxyhexanoyl-[ACP] + L-alanine + H(+) = (8S)-8-amino-7-oxononanoate + holo-[ACP] + CO2. Its pathway is cofactor biosynthesis; biotin biosynthesis. In terms of biological role, catalyzes the decarboxylative condensation of pimeloyl-[acyl-carrier protein] and L-alanine to produce 8-amino-7-oxononanoate (AON), [acyl-carrier protein], and carbon dioxide. The sequence is that of 8-amino-7-oxononanoate synthase from Maricaulis maris (strain MCS10) (Caulobacter maris).